The sequence spans 121 residues: Large ribosomal subunit protein bL20c (121 aa).

Belongs to the bacterial ribosomal protein bL20 family.

It is found in the plastid. The protein resides in the chloroplast. Functionally, binds directly to 23S ribosomal RNA and is necessary for the in vitro assembly process of the 50S ribosomal subunit. It is not involved in the protein synthesizing functions of that subunit. In Lotus japonicus (Lotus corniculatus var. japonicus), this protein is Large ribosomal subunit protein bL20c.